The sequence spans 274 residues: RsbT co-antagonist protein RsbRA (274 aa).

Residues 150-265 (SAPLIPVFEN…KGIQTALEMT (116 aa)) enclose the STAS domain. Phosphothreonine occurs at positions 171 and 205.

Interacts with RsbRB and RsbS in the stressosome. The stressosome probably also contains RsbRC and RsbRD. In terms of processing, phosphorylated by RsbT. This threonine phosphorylation abrogates the ability of RsbRA to stimulate RsbT in vitro.

In terms of biological role, acts as a positive regulator of sigma-B activity in response to salt and heat stress by stimulating the activity of the RsbT kinase toward RsbS in vitro. Functionally, one of 4 functionally non-identical RsbR paralogs, it functions in the environmental signaling branch of the general stress response. Negative regulator of sigma-B activity. Non-phosphorylated RsbS binds to RsbT, preventing its association with RsbU. Requires any one of RsbRA, RsbRB, RsbRC or RsbRD to sequester RsbT. When RsbS and the RsbR paralog(s) are phosphorylated, they release RsbT, which can then bind and activate RsbU. This is RsbT co-antagonist protein RsbRA (rsbRA) from Bacillus subtilis (strain 168).